Consider the following 360-residue polypeptide: Peptide chain release factor 1 (360 aa).

An N5-methylglutamine modification is found at Gln235.

It belongs to the prokaryotic/mitochondrial release factor family. Methylated by PrmC. Methylation increases the termination efficiency of RF1.

The protein localises to the cytoplasm. Its function is as follows. Peptide chain release factor 1 directs the termination of translation in response to the peptide chain termination codons UAG and UAA. This chain is Peptide chain release factor 1, found in Mannheimia succiniciproducens (strain KCTC 0769BP / MBEL55E).